We begin with the raw amino-acid sequence, 442 residues long: Putative toxin YopC (442 aa).

This sequence in the C-terminal section; belongs to the MbcT/ParT/Res family. As to quaternary structure, forms a complex with cognate antitoxin YopB.

May be the toxic component of a type II toxin-antitoxin (TA) system. Neutralized by its cognate antitoxin YopB. The sequence is that of Putative toxin YopC (yopC) from Bacillus subtilis (strain 168).